The chain runs to 296 residues: 4-hydroxy-tetrahydrodipicolinate synthase (296 aa).

Thr49 provides a ligand contact to pyruvate. Tyr137 serves as the catalytic Proton donor/acceptor. Lys166 functions as the Schiff-base intermediate with substrate in the catalytic mechanism. Ile208 lines the pyruvate pocket.

This sequence belongs to the DapA family. As to quaternary structure, homotetramer; dimer of dimers.

It localises to the cytoplasm. It catalyses the reaction L-aspartate 4-semialdehyde + pyruvate = (2S,4S)-4-hydroxy-2,3,4,5-tetrahydrodipicolinate + H2O + H(+). It participates in amino-acid biosynthesis; L-lysine biosynthesis via DAP pathway; (S)-tetrahydrodipicolinate from L-aspartate: step 3/4. Its function is as follows. Catalyzes the condensation of (S)-aspartate-beta-semialdehyde [(S)-ASA] and pyruvate to 4-hydroxy-tetrahydrodipicolinate (HTPA). This Pelodictyon phaeoclathratiforme (strain DSM 5477 / BU-1) protein is 4-hydroxy-tetrahydrodipicolinate synthase.